The chain runs to 421 residues: MDYLQITKSPTLQGSVSISGAKNSALPILAATLLSQNEVTINNLPDVADVKTLAKLLEHLGVNITWHKPTSLTCLAENIVHTRAIYDIVRKMRASILVLGPLLSRFGYCEVSLPGGCAIGARPVDLHIKAMEKMGADIQIKGGYIIAQAKGGLKGADILFDKITVTGSENVIMAAALAQGKTHIINAAKEPEVVQLCEILSQSGVKIEGIGGNELIIYGTGGELLNFAPICVIPDRIEAGTYLCAGAITNSSITLENVENNHLSAITDKLEEIGFGFNKSEHSLTLLPAQSLKPFEIITTEYPGFPTDMQAQFMALATQCEGTSVIEERLFENRFMHVSELQRLGADISLKGNHATIKGISPLLGADVMATDLRASSALVVASLVSEGTTNIHRIYHLDRGYERLEHKLQHLGVNIVRLKS.

Position 22 to 23 (22 to 23 (KN)) interacts with phosphoenolpyruvate. Residue R93 participates in UDP-N-acetyl-alpha-D-glucosamine binding. The active-site Proton donor is C117. C117 carries the 2-(S-cysteinyl)pyruvic acid O-phosphothioketal modification. UDP-N-acetyl-alpha-D-glucosamine-binding positions include 122–126 (RPVDL), D308, and L330.

The protein belongs to the EPSP synthase family. MurA subfamily.

It is found in the cytoplasm. The enzyme catalyses phosphoenolpyruvate + UDP-N-acetyl-alpha-D-glucosamine = UDP-N-acetyl-3-O-(1-carboxyvinyl)-alpha-D-glucosamine + phosphate. It participates in cell wall biogenesis; peptidoglycan biosynthesis. In terms of biological role, cell wall formation. Adds enolpyruvyl to UDP-N-acetylglucosamine. The protein is UDP-N-acetylglucosamine 1-carboxyvinyltransferase of Helicobacter hepaticus (strain ATCC 51449 / 3B1).